The chain runs to 389 residues: Oxytocin receptor (389 aa).

The tract at residues M1–C27 is disordered. Over M1–L38 the chain is Extracellular. 3 N-linked (GlcNAc...) asparagine glycosylation sites follow: N8, N15, and N26. Over residues N8–A18 the composition is skewed to polar residues. The helical transmembrane segment at A39 to A63 threads the bilayer. The Cytoplasmic segment spans residues L64–L74. Residues F75–L97 form a helical membrane-spanning segment. The Extracellular portion of the chain corresponds to L98–R113. Cysteines 112 and 187 form a disulfide. A helical transmembrane segment spans residues L114 to L135. Residues D136–R154 are Cytoplasmic-facing. The chain crosses the membrane as a helical span at residues L155 to F175. Residues S176–T202 are Extracellular-facing. The chain crosses the membrane as a helical span at residues W203 to F225. The Cytoplasmic portion of the chain corresponds to K226–K275. Residues M276–V294 form a helical membrane-spanning segment. Over Q295–S309 the chain is Extracellular. The helical transmembrane segment at A310–F332 threads the bilayer. Residues T333 to A389 are Cytoplasmic-facing. A disordered region spans residues G358–A389. Over residues T360–A389 the composition is skewed to low complexity. 2 positions are modified to phosphoserine: S366 and S368.

It belongs to the G-protein coupled receptor 1 family. Vasopressin/oxytocin receptor subfamily.

It localises to the cell membrane. In terms of biological role, receptor for oxytocin. The activity of this receptor is mediated by G proteins which activate a phosphatidylinositol-calcium second messenger system. This is Oxytocin receptor (OXTR) from Macaca mulatta (Rhesus macaque).